Consider the following 262-residue polypeptide: Sulfur carrier protein FdhD (262 aa).

The active-site Cysteine persulfide intermediate is the C107.

This sequence belongs to the FdhD family.

Its subcellular location is the cytoplasm. Functionally, required for formate dehydrogenase (FDH) activity. Acts as a sulfur carrier protein that transfers sulfur from IscS to the molybdenum cofactor prior to its insertion into FDH. The polypeptide is Sulfur carrier protein FdhD (Bacillus subtilis (strain 168)).